The following is an 81-amino-acid chain: Putative membrane protein insertion efficiency factor (81 aa).

Belongs to the UPF0161 family.

It localises to the cell inner membrane. Could be involved in insertion of integral membrane proteins into the membrane. The chain is Putative membrane protein insertion efficiency factor from Pseudomonas syringae pv. tomato (strain ATCC BAA-871 / DC3000).